Here is a 476-residue protein sequence, read N- to C-terminus: Protein DETOXIFICATION 17 (476 aa).

Helical transmembrane passes span 29-51 (LWLSAPLIGVSLLQYSLQVISVM), 70-90 (FASVTGFTFLLGTASALETLC), 111-131 (FVLLILSVPLSIIWANTEQIL), 140-160 (IASVAGSYAKYMIPSLFAYGL), 177-197 (VFVCSGITTCLHLLLCWLFVL), 205-225 (GAALAISVSYWFNVILLSCYV), 252-272 (IAFPSAVMVCLELWSFELLVL), 286-306 (VLSICLNTSLTIWQISVGLGG), 326-346 (LAVYVIVGIAVAEGIVVVTVL), 363-383 (IIAYAASMIPIVACGNFLDGL), 405-425 (LGSYYLVGVPLGLLLGFHFHI), and 431-451 (WLGIVTALSVQVLCLSLVTIF).

This sequence belongs to the multi antimicrobial extrusion (MATE) (TC 2.A.66.1) family.

It is found in the membrane. The polypeptide is Protein DETOXIFICATION 17 (Arabidopsis thaliana (Mouse-ear cress)).